A 251-amino-acid polypeptide reads, in one-letter code: CDP-diacylglycerol pyrophosphatase (251 aa).

A helical transmembrane segment spans residues 4-24 (AGLLFLVMIVIAVVATGIGYW).

Belongs to the Cdh family.

The protein resides in the cell inner membrane. The enzyme catalyses a CDP-1,2-diacyl-sn-glycerol + H2O = a 1,2-diacyl-sn-glycero-3-phosphate + CMP + 2 H(+). It participates in phospholipid metabolism; CDP-diacylglycerol degradation; phosphatidate from CDP-diacylglycerol: step 1/1. This chain is CDP-diacylglycerol pyrophosphatase, found in Escherichia coli O45:K1 (strain S88 / ExPEC).